A 269-amino-acid chain; its full sequence is Tryptophan synthase alpha chain (269 aa).

Active-site proton acceptor residues include Glu49 and Asp60.

It belongs to the TrpA family. In terms of assembly, tetramer of two alpha and two beta chains.

It carries out the reaction (1S,2R)-1-C-(indol-3-yl)glycerol 3-phosphate + L-serine = D-glyceraldehyde 3-phosphate + L-tryptophan + H2O. Its pathway is amino-acid biosynthesis; L-tryptophan biosynthesis; L-tryptophan from chorismate: step 5/5. In terms of biological role, the alpha subunit is responsible for the aldol cleavage of indoleglycerol phosphate to indole and glyceraldehyde 3-phosphate. The polypeptide is Tryptophan synthase alpha chain (Pseudomonas putida (strain ATCC 700007 / DSM 6899 / JCM 31910 / BCRC 17059 / LMG 24140 / F1)).